The following is a 226-amino-acid chain: Uracil-DNA glycosylase (226 aa).

Asp65 serves as the catalytic Proton acceptor.

It belongs to the uracil-DNA glycosylase (UDG) superfamily. UNG family.

It localises to the cytoplasm. It catalyses the reaction Hydrolyzes single-stranded DNA or mismatched double-stranded DNA and polynucleotides, releasing free uracil.. Its function is as follows. Excises uracil residues from the DNA which can arise as a result of misincorporation of dUMP residues by DNA polymerase or due to deamination of cytosine. This chain is Uracil-DNA glycosylase, found in Enterococcus faecalis (strain ATCC 700802 / V583).